The sequence spans 366 residues: Ribosomal RNA large subunit methyltransferase M (366 aa).

Residues Ser188, 221-224 (CPGG), Asp240, Asp260, and Asp277 contribute to the S-adenosyl-L-methionine site. Lys306 acts as the Proton acceptor in catalysis.

This sequence belongs to the class I-like SAM-binding methyltransferase superfamily. RNA methyltransferase RlmE family. RlmM subfamily. Monomer.

The protein localises to the cytoplasm. It carries out the reaction cytidine(2498) in 23S rRNA + S-adenosyl-L-methionine = 2'-O-methylcytidine(2498) in 23S rRNA + S-adenosyl-L-homocysteine + H(+). Catalyzes the 2'-O-methylation at nucleotide C2498 in 23S rRNA. In Escherichia coli O45:K1 (strain S88 / ExPEC), this protein is Ribosomal RNA large subunit methyltransferase M.